Reading from the N-terminus, the 84-residue chain is Exodeoxyribonuclease 7 small subunit (84 aa).

This sequence belongs to the XseB family. In terms of assembly, heterooligomer composed of large and small subunits.

Its subcellular location is the cytoplasm. It carries out the reaction Exonucleolytic cleavage in either 5'- to 3'- or 3'- to 5'-direction to yield nucleoside 5'-phosphates.. Functionally, bidirectionally degrades single-stranded DNA into large acid-insoluble oligonucleotides, which are then degraded further into small acid-soluble oligonucleotides. The polypeptide is Exodeoxyribonuclease 7 small subunit (Yersinia pseudotuberculosis serotype O:3 (strain YPIII)).